Consider the following 354-residue polypeptide: Histidinol-phosphate aminotransferase (354 aa).

K210 is subject to N6-(pyridoxal phosphate)lysine.

Belongs to the class-II pyridoxal-phosphate-dependent aminotransferase family. Histidinol-phosphate aminotransferase subfamily. As to quaternary structure, homodimer. It depends on pyridoxal 5'-phosphate as a cofactor.

It carries out the reaction L-histidinol phosphate + 2-oxoglutarate = 3-(imidazol-4-yl)-2-oxopropyl phosphate + L-glutamate. It functions in the pathway amino-acid biosynthesis; L-histidine biosynthesis; L-histidine from 5-phospho-alpha-D-ribose 1-diphosphate: step 7/9. In Clostridium botulinum (strain Langeland / NCTC 10281 / Type F), this protein is Histidinol-phosphate aminotransferase.